The chain runs to 468 residues: Tapasin-related protein (468 aa).

Residues 1 to 18 (MGTQEGWCLLLCLALSGA) form the signal peptide. Residues 19 to 405 (AETKPHPAEG…STQVVPPERR (387 aa)) are Lumenal-facing. Residues 181–297 (PQGTVRTAVE…SLYRAQQIIQ (117 aa)) form the Ig-like V-type domain. Cystine bridges form between cysteine 212-cysteine 283 and cysteine 321-cysteine 382. In terms of domain architecture, Ig-like C1-type spans 304–394 (PKVRLSLANE…THISLEEPLG (91 aa)). Residues 406-426 (TALGVIFASSLFLLALMFLGL) traverse the membrane as a helical segment. The Cytoplasmic portion of the chain corresponds to 427–468 (QRRQAPTGLGLLQAERWETTSCADTQSSHLHEDRTARVSQPS). The interval 449-468 (ADTQSSHLHEDRTARVSQPS) is disordered.

As to quaternary structure, interacts with peptide-free HLA-A*02-B2M complexes or those loaded with low affinity peptides, likely facilitating peptide exchange onto higher affinity peptides. Interacts with MR1 in a ligand-independent way; this interaction may stabilize MR1 pool and facilitate ligand loading and dissociation.

It localises to the cell membrane. The protein localises to the endoplasmic reticulum membrane. The protein resides in the microsome membrane. Its subcellular location is the golgi apparatus membrane. Functionally, component of the antigen processing and presentation pathway, which binds to MHC class I coupled with beta2-microglobulin/B2M. Association between TAPBPR and MHC class I occurs in the absence of a functional peptide-loading complex (PLC). The chain is Tapasin-related protein (TAPBPL) from Homo sapiens (Human).